Reading from the N-terminus, the 421-residue chain is Gamma-glutamyl phosphate reductase (421 aa).

It belongs to the gamma-glutamyl phosphate reductase family.

Its subcellular location is the cytoplasm. It carries out the reaction L-glutamate 5-semialdehyde + phosphate + NADP(+) = L-glutamyl 5-phosphate + NADPH + H(+). Its pathway is amino-acid biosynthesis; L-proline biosynthesis; L-glutamate 5-semialdehyde from L-glutamate: step 2/2. Functionally, catalyzes the NADPH-dependent reduction of L-glutamate 5-phosphate into L-glutamate 5-semialdehyde and phosphate. The product spontaneously undergoes cyclization to form 1-pyrroline-5-carboxylate. This Acinetobacter baumannii (strain ACICU) protein is Gamma-glutamyl phosphate reductase.